The sequence spans 96 residues: Protein TraA (96 aa).

The polypeptide is Protein TraA (traA) (Escherichia coli).